Reading from the N-terminus, the 380-residue chain is Reducing-end xylose-releasing exo-oligoxylanase Rex8A (380 aa).

E70 (proton donor) is an active-site residue. The Proton acceptor role is filled by D265.

This sequence belongs to the glycosyl hydrolase 8 (cellulase D) family.

The enzyme catalyses Hydrolysis of (1-&gt;4)-beta-D-xylose residues from the reducing end of oligosaccharides.. It participates in glycan degradation; xylan degradation. Its function is as follows. Involved in depolymerization of xylan, a major component of the lignocellulosic substrates. Acts as an exo-oligoxylanase that efficiently hydrolyzes xylooligosaccharides, releasing xylose from their reducing ends. Hydrolyzes xylooligomers of 3 to 6 xylose units to xylose and xylobiose. Besides linear xylooligosaccharides, also hydrolyzes branched xylooligomers, such as xylooligomers decorated with 4-O-methyl-D-glucuronic acid moieties. Its proposed role is the degradation of xylooligomers produced by the activity of extracellular xylanases once they have been transported inside cells. Shows minor activity on polymeric xylan (glucuronoxylan from beechwood). Is not active on cellooligosaccharides or cellulosic substrates, or on other polysaccharides such as pectin, polygalacturonic acid, laminarin, or lichenan. In Paenibacillus barcinonensis, this protein is Reducing-end xylose-releasing exo-oligoxylanase Rex8A.